Reading from the N-terminus, the 300-residue chain is Sulfate adenylyltransferase subunit 2 (300 aa).

Positions 281–300 (RAIDRDEAGSMEKKKREGYF) are disordered.

This sequence belongs to the PAPS reductase family. CysD subfamily. As to quaternary structure, heterodimer composed of CysD, the smaller subunit, and CysN.

It catalyses the reaction sulfate + ATP + H(+) = adenosine 5'-phosphosulfate + diphosphate. The protein operates within sulfur metabolism; hydrogen sulfide biosynthesis; sulfite from sulfate: step 1/3. Its function is as follows. With CysN forms the ATP sulfurylase (ATPS) that catalyzes the adenylation of sulfate producing adenosine 5'-phosphosulfate (APS) and diphosphate, the first enzymatic step in sulfur assimilation pathway. APS synthesis involves the formation of a high-energy phosphoric-sulfuric acid anhydride bond driven by GTP hydrolysis by CysN coupled to ATP hydrolysis by CysD. The sequence is that of Sulfate adenylyltransferase subunit 2 from Brucella melitensis biotype 2 (strain ATCC 23457).